The sequence spans 804 residues: Cyclic di-GMP-binding protein (804 aa).

The first 18 residues, 1 to 18, serve as a signal peptide directing secretion; sequence MKMVSLIALLVFATGAQA. The Periplasmic segment spans residues 19–766; the sequence is APIASKAPAH…DWYMHNHPFR (748 aa). A disordered region spans residues 24–69; that stretch reads KAPAHQPTGSDLPPLPAAAPVAPAAQPSAQAVDPASAAPASDAGSA. The chain crosses the membrane as a helical span at residues 767-787; the sequence is VIVVGLVGCLLVVAVLVRALF. The Cytoplasmic portion of the chain corresponds to 788–804; it reads RHAMFRRRQLQEERQKS.

Belongs to the AcsB/BcsB family. Tightly associated with the cellulose synthase catalytic subunit.

The protein resides in the cell inner membrane. Its pathway is glycan metabolism; bacterial cellulose biosynthesis. In terms of biological role, binds the cellulose synthase activator, bis-(3'-5') cyclic diguanylic acid (c-di-GMP). In Komagataeibacter xylinus (Gluconacetobacter xylinus), this protein is Cyclic di-GMP-binding protein (bcsBI).